Here is a 338-residue protein sequence, read N- to C-terminus: Mitochondrial glutathione transporter SLC25A40 (338 aa).

Solcar repeat units lie at residues 13 to 131, 139 to 223, and 233 to 327; these read VTPL…LTAL, NESR…LKKW, and PTFM…GKSF. 6 helical membrane-spanning segments follow: residues 19–39, 103–123, 145–165, 199–220, 239–259, and 298–318; these read MFASCTGAILTSLMVTPFDVV, LWSGLPPTLVMAVPATVIYFT, IVAGIVARLGAVTVISPLELI, WAPTILRDVPFSAMYWYNYEVL, FTSGALSGSFAAVVTLPFDVV, and GLFTGLIPRLIKIAPACAVMI.

It belongs to the mitochondrial carrier (TC 2.A.29) family.

The protein localises to the mitochondrion inner membrane. The enzyme catalyses glutathione(in) = glutathione(out). Its function is as follows. Probable mitochondrial transporter required for glutathione import into mitochondria. Glutathione, which plays key roles in oxidative metabolism, is produced exclusively in the cytosol and is imported in many organelles. Mitochondrial glutathione is required for the activity and stability of proteins containing iron-sulfur clusters, as well as erythropoiesis. This Bos taurus (Bovine) protein is Mitochondrial glutathione transporter SLC25A40.